The primary structure comprises 76 residues: UPF0291 protein BCE_1981 (76 aa).

It belongs to the UPF0291 family.

The protein resides in the cytoplasm. The chain is UPF0291 protein BCE_1981 from Bacillus cereus (strain ATCC 10987 / NRS 248).